Consider the following 307-residue polypeptide: Phosphonates import ATP-binding protein PhnC (307 aa).

Residues 4–252 (IRIERLSKTF…RLHALYGDDA (249 aa)) enclose the ABC transporter domain. 37-44 (GASGSGKS) is an ATP binding site. The segment covering 265-275 (AAREAAGEPAR) has biased composition (basic and acidic residues). A disordered region spans residues 265-307 (AAREAAGEPARRAPAAFDSAGSPDLPDSQPASPRRMLAASSMR).

It belongs to the ABC transporter superfamily. Phosphonates importer (TC 3.A.1.9.1) family. In terms of assembly, the complex is composed of two ATP-binding proteins (PhnC), two transmembrane proteins (PhnE) and a solute-binding protein (PhnD).

It is found in the cell inner membrane. The enzyme catalyses phosphonate(out) + ATP + H2O = phosphonate(in) + ADP + phosphate + H(+). In terms of biological role, part of the ABC transporter complex PhnCDE involved in phosphonates import. Responsible for energy coupling to the transport system. In Burkholderia pseudomallei (strain 1710b), this protein is Phosphonates import ATP-binding protein PhnC.